A 475-amino-acid chain; its full sequence is Pup--protein ligase (475 aa).

Residue Glu-19 participates in Mg(2+) binding. ATP is bound at residue Arg-64. Tyr-66 provides a ligand contact to Mg(2+). Catalysis depends on Asp-68, which acts as the Proton acceptor. Glu-74 serves as a coordination point for Mg(2+). The ATP site is built by Thr-77 and Trp-436.

Belongs to the Pup ligase/Pup deamidase family. Pup-conjugating enzyme subfamily.

It catalyses the reaction ATP + [prokaryotic ubiquitin-like protein]-L-glutamate + [protein]-L-lysine = ADP + phosphate + N(6)-([prokaryotic ubiquitin-like protein]-gamma-L-glutamyl)-[protein]-L-lysine.. Its pathway is protein degradation; proteasomal Pup-dependent pathway. It participates in protein modification; protein pupylation. Catalyzes the covalent attachment of the prokaryotic ubiquitin-like protein modifier Pup to the proteasomal substrate proteins, thereby targeting them for proteasomal degradation. This tagging system is termed pupylation. The ligation reaction involves the side-chain carboxylate of the C-terminal glutamate of Pup and the side-chain amino group of a substrate lysine. This chain is Pup--protein ligase, found in Corynebacterium aurimucosum (strain ATCC 700975 / DSM 44827 / CIP 107346 / CN-1) (Corynebacterium nigricans).